We begin with the raw amino-acid sequence, 321 residues long: Protoheme IX farnesyltransferase (321 aa).

Helical transmembrane passes span 28 to 48 (VMSLVIFTALAGMLIAPDPVH), 49 to 69 (PIVGFASLLAIAVGAGASGAL), 94 to 114 (VMPNEALAFGLTLSFLSVFTL), 116 to 136 (IVANWLAAGFLAFTIFFYVVI), 149 to 169 (IVIGGAAGAFPPMVGYAAATG), 176 to 196 (FILFAIIFIWTPPHFWALALG), 222 to 242 (ILLYTLLLAPLGVAPWLLGFA), 247 to 267 (GMLSIALGAAMLFFAARVYIV), 277 to 297 (AKALFGFSILYLFLLFAEIVV), and 300 to 320 (LVPIVVAMGAWLTSGMFPGFF).

This sequence belongs to the UbiA prenyltransferase family. Protoheme IX farnesyltransferase subfamily.

The protein localises to the cell inner membrane. It carries out the reaction heme b + (2E,6E)-farnesyl diphosphate + H2O = Fe(II)-heme o + diphosphate. It participates in porphyrin-containing compound metabolism; heme O biosynthesis; heme O from protoheme: step 1/1. Converts heme B (protoheme IX) to heme O by substitution of the vinyl group on carbon 2 of heme B porphyrin ring with a hydroxyethyl farnesyl side group. This is Protoheme IX farnesyltransferase from Beijerinckia indica subsp. indica (strain ATCC 9039 / DSM 1715 / NCIMB 8712).